The sequence spans 171 residues: Protein GrpE (171 aa).

The interval 1-22 (MNHEQPDIESQQSAADAAATAG) is disordered.

It belongs to the GrpE family. Homodimer.

The protein localises to the cytoplasm. Participates actively in the response to hyperosmotic and heat shock by preventing the aggregation of stress-denatured proteins, in association with DnaK and GrpE. It is the nucleotide exchange factor for DnaK and may function as a thermosensor. Unfolded proteins bind initially to DnaJ; upon interaction with the DnaJ-bound protein, DnaK hydrolyzes its bound ATP, resulting in the formation of a stable complex. GrpE releases ADP from DnaK; ATP binding to DnaK triggers the release of the substrate protein, thus completing the reaction cycle. Several rounds of ATP-dependent interactions between DnaJ, DnaK and GrpE are required for fully efficient folding. The sequence is that of Protein GrpE from Stenotrophomonas maltophilia (strain K279a).